Here is a 596-residue protein sequence, read N- to C-terminus: M-phase inducer phosphatase (596 aa).

Phosphoserine occurs at positions 99 and 178. The tract at residues 174 to 221 (LSSSSFDSYLRPNVSRSRSSGNAPPFLRSRSSSSYSINKKKGTSGGQA) is disordered. A Rhodanese domain is found at 429-533 (IFDKCIIIDC…FYENHKNRCD (105 aa)). C480 acts as the Phosphocysteine intermediate in catalysis.

The protein belongs to the MPI phosphatase family. As to quaternary structure, interacts with rad24 during G2 in a srk1-dependent manner; the interaction is increased during osmostress. Phosphorylated by srk1 in the N-terminus; phosphorylation promotes nuclear exclusion.

The protein resides in the cytoplasm. The protein localises to the nucleus. The catalysed reaction is O-phospho-L-tyrosyl-[protein] + H2O = L-tyrosyl-[protein] + phosphate. Its function is as follows. Tyrosine protein phosphatase which functions as a dosage-dependent inducer of mitotic and meiotic progression. Directly dephosphorylates cdc2 and stimulates its kinase activity. Required for the G2/M transition of the cell cycle. Required for induction of meiosis II. The protein is M-phase inducer phosphatase of Schizosaccharomyces pombe (strain 972 / ATCC 24843) (Fission yeast).